Consider the following 259-residue polypeptide: 3-oxo-5-alpha-steroid 4-dehydrogenase 1 (259 aa).

Transmembrane regions (helical) follow at residues 10–30, 86–106, 111–131, 146–166, and 206–226; these read LCLLDMLVYLEGFMAFVSIVG, VLLAMFLIHYVQRTLVFPVLI, PTLLVTFVLAFLFCTFNGYVQ, VTHPCFLTGFALWLVGMVINI, and WCGFALASWSLQGVVFALFTL.

This sequence belongs to the steroid 5-alpha reductase family. In terms of tissue distribution, liver and prostate (at a low level).

Its subcellular location is the microsome membrane. The protein resides in the endoplasmic reticulum membrane. It carries out the reaction a 3-oxo-5alpha-steroid + NADP(+) = a 3-oxo-Delta(4)-steroid + NADPH + H(+). It catalyses the reaction 5alpha-pregnane-3,20-dione + NADP(+) = progesterone + NADPH + H(+). The enzyme catalyses 17beta-hydroxy-5alpha-androstan-3-one + NADP(+) = testosterone + NADPH + H(+). The catalysed reaction is androst-4-ene-3,17-dione + NADPH + H(+) = 5alpha-androstan-3,17-dione + NADP(+). Converts testosterone into 5-alpha-dihydrotestosterone and progesterone or corticosterone into their corresponding 5-alpha-3-oxosteroids. It plays a central role in sexual differentiation and androgen physiology. The chain is 3-oxo-5-alpha-steroid 4-dehydrogenase 1 from Rattus norvegicus (Rat).